The primary structure comprises 241 residues: Probable transcriptional regulatory protein str0195 (241 aa).

Belongs to the TACO1 family. YeeN subfamily.

It localises to the cytoplasm. The polypeptide is Probable transcriptional regulatory protein str0195 (Streptococcus thermophilus (strain CNRZ 1066)).